Reading from the N-terminus, the 409-residue chain is Autotransproter heptosyltransferase BAHTCr (409 aa).

ADP-D-glycero-beta-D-manno-heptose is bound by residues threonine 107, leucine 108, and glycine 109. Residue aspartate 110 is the Proton acceptor of the active site. Residues glutamine 224, threonine 226, lysine 230, arginine 257, glycine 302, and glutamate 326 each contribute to the ADP-D-glycero-beta-D-manno-heptose site. Residues cysteine 339, cysteine 342, cysteine 358, and cysteine 370 each coordinate Fe(3+).

The protein belongs to the glycosyltransferase 9 family. Homododecamer composed of 6 homodimers forming a ring. Fe(3+) is required as a cofactor.

It is found in the cytoplasm. It carries out the reaction ADP-D-glycero-beta-D-manno-heptose + L-seryl-[protein] = O-(D-glycero-alpha-D-manno-heptosyl)-L-seryl-[protein] + ADP + H(+). The enzyme catalyses ADP-L-glycero-beta-D-manno-heptose + L-seryl-[protein] = O-(L-glycero-alpha-D-manno-heptosyl)-L-seryl-[protein] + ADP + H(+). In terms of biological role, glycosylates autotransporter CARC. By glycosylating CARC, involved in the colonization of the mouse host gastrointestinal tract. In Citrobacter rodentium (strain ICC168) (Citrobacter freundii biotype 4280), this protein is Autotransproter heptosyltransferase BAHTCr.